Consider the following 162-residue polypeptide: Large ribosomal subunit protein uL10 (162 aa).

It belongs to the universal ribosomal protein uL10 family. Part of the ribosomal stalk of the 50S ribosomal subunit. The N-terminus interacts with L11 and the large rRNA to form the base of the stalk. The C-terminus forms an elongated spine to which L12 dimers bind in a sequential fashion forming a multimeric L10(L12)X complex.

Functionally, forms part of the ribosomal stalk, playing a central role in the interaction of the ribosome with GTP-bound translation factors. This Mycoplasma genitalium (strain ATCC 33530 / DSM 19775 / NCTC 10195 / G37) (Mycoplasmoides genitalium) protein is Large ribosomal subunit protein uL10 (rplJ).